A 378-amino-acid polypeptide reads, in one-letter code: Protein KlaB (378 aa).

This sequence belongs to the TelA family.

Belongs to the kla operon, which is associated with cryptic tellurite resistance, and IncW plasmid fertility inhibition. The protein is Protein KlaB (klaB) of Escherichia coli.